Consider the following 336-residue polypeptide: DNA-directed RNA polymerase subunit alpha (336 aa).

An alpha N-terminal domain (alpha-NTD) region spans residues 1 to 232 (MIQKNWQELI…DQLGVFVNFD (232 aa)). The tract at residues 248–336 (FNPALLKKVD…DLAKRYEDQY (89 aa)) is alpha C-terminal domain (alpha-CTD).

The protein belongs to the RNA polymerase alpha chain family. As to quaternary structure, homodimer. The RNAP catalytic core consists of 2 alpha, 1 beta, 1 beta' and 1 omega subunit. When a sigma factor is associated with the core the holoenzyme is formed, which can initiate transcription.

The enzyme catalyses RNA(n) + a ribonucleoside 5'-triphosphate = RNA(n+1) + diphosphate. In terms of biological role, DNA-dependent RNA polymerase catalyzes the transcription of DNA into RNA using the four ribonucleoside triphosphates as substrates. The chain is DNA-directed RNA polymerase subunit alpha from Rhizobium radiobacter (Agrobacterium tumefaciens).